The chain runs to 582 residues: Semenogelin-2 (582 aa).

Residues 1-23 (MKSIILFVLSLLLILEKQAAVMG) form the signal peptide. Disordered stretches follow at residues 25–65 (KGGS…SSSI), 91–157 (HKTT…GISS), 171–192 (LSKE…GSQS), 272–366 (NLNQ…KDIQ), and 393–557 (SNQD…HNTV). Residues 50–59 (GQKDKQHTES) show a composition bias toward basic and acidic residues. Positions 111 to 134 (QKGRDHVKPKRHFRLIVIHRKGGQ) are enriched in basic residues. 2 stretches are compositionally biased toward polar residues: residues 137–157 (HGTQ…GISS) and 174–192 (EQAS…GSQS). The span at 293-310 (TEERQFNHGEKSVQKDVP) shows a compositional bias: basic and acidic residues. Residues 325–335 (KSQNQVSIPSQ) are compositionally biased toward polar residues. Composition is skewed to basic and acidic residues over residues 336–345 (DQEHGHKENK), 353–366 (TEER…KDIQ), 396–405 (DQEHGHKENK), and 413–426 (TEER…KDIQ). 2 stretches are compositionally biased toward polar residues: residues 427–437 (KSVSKGSISIQ) and 445–455 (KSQNQVTIPSQ). The segment covering 456 to 465 (DQEHGHKENK) has biased composition (basic and acidic residues). Composition is skewed to polar residues over residues 487 to 498 (KDVSQSSLSFQT) and 506 to 529 (SQIQ…NSGK). Over residues 530–546 (SADREQDLLSHEQESRY) the composition is skewed to basic and acidic residues. A compositionally biased stretch (polar residues) spans 547–557 (QQKSSGAHNTV).

Belongs to the semenogelin family. In terms of assembly, interacts with SERPINA5.

The protein resides in the secreted. Its function is as follows. Participates in the formation of a gel matrix (sperm coagulum) entrapping the accessory gland secretions and ejaculated spermatozoa. The chain is Semenogelin-2 (SEMG2) from Colobus guereza (Mantled guereza).